Here is a 118-residue protein sequence, read N- to C-terminus: V-type proton ATPase subunit G 3 (118 aa).

The disordered stretch occupies residues 1–34; that stretch reads MTSQSQGIHQLLQAEKRAKDKLEEAKKRKGKRLK. Residues 5-54 adopt a coiled-coil conformation; the sequence is SQGIHQLLQAEKRAKDKLEEAKKRKGKRLKQAKEEAMVEIDQYRMQRDKE. Residues 14-26 show a composition bias toward basic and acidic residues; it reads AEKRAKDKLEEAK.

Belongs to the V-ATPase G subunit family. In terms of assembly, V-ATPase is a heteromultimeric enzyme made up of two complexes: the ATP-hydrolytic V1 complex and the proton translocation V0 complex. The V1 complex consists of three catalytic AB heterodimers that form a heterohexamer, three peripheral stalks each consisting of EG heterodimers, one central rotor including subunits D and F, and the regulatory subunits C and H. The proton translocation complex V0 consists of the proton transport subunit a, a ring of proteolipid subunits c9c'', rotary subunit d, subunits e and f, and the accessory subunits ATP6AP1/Ac45 and ATP6AP2/PRR. In terms of tissue distribution, kidney.

Its function is as follows. Subunit of the V1 complex of vacuolar(H+)-ATPase (V-ATPase), a multisubunit enzyme composed of a peripheral complex (V1) that hydrolyzes ATP and a membrane integral complex (V0) that translocates protons. V-ATPase is responsible for acidifying and maintaining the pH of intracellular compartments and in some cell types, is targeted to the plasma membrane, where it is responsible for acidifying the extracellular environment. The chain is V-type proton ATPase subunit G 3 (ATP6V1G3) from Homo sapiens (Human).